The chain runs to 676 residues: Exostosin-like 1 (676 aa).

Over 1 to 9 (MQSWRRRKS) the chain is Cytoplasmic. The chain crosses the membrane as a helical; Signal-anchor for type II membrane protein span at residues 10-30 (LWLALSASWLLLVLLGGFSLL). The Lumenal segment spans residues 31–676 (RLALPPRPRP…RKKYRSLEKP (646 aa)). The segment at 238–264 (TADTGSSACPWDGRCEQDPGPGQTQRQ) is disordered. Residue asparagine 269 is glycosylated (N-linked (GlcNAc...) asparagine). Cysteines 584 and 634 form a disulfide. The disordered stretch occupies residues 610–631 (RQEAAPLAPGGPGPRPKPPAPA). The span at 618 to 631 (PGGPGPRPKPPAPA) shows a compositional bias: pro residues.

The protein belongs to the glycosyltransferase 47 family.

Its subcellular location is the endoplasmic reticulum membrane. It carries out the reaction 3-O-{[(1-&gt;4)-beta-D-GlcA-(1-&gt;4)-alpha-D-GlcNAc](n)-(1-&gt;4)-beta-D-GlcA-(1-&gt;3)-beta-D-Gal-(1-&gt;3)-beta-D-Gal-(1-&gt;4)-beta-D-Xyl}-L-seryl-[protein] + UDP-N-acetyl-alpha-D-glucosamine = 3-O-{alpha-D-GlcNAc-[(1-&gt;4)-beta-D-GlcA-(1-&gt;4)-alpha-D-GlcNAc](n)-(1-&gt;4)-beta-D-GlcA-(1-&gt;3)-beta-D-Gal-(1-&gt;3)-beta-D-Gal-(1-&gt;4)-beta-D-Xyl}-L-seryl-[protein] + UDP + H(+). Its pathway is protein modification; protein glycosylation. Functionally, glycosyltransferase required for the biosynthesis of heparan-sulfate (HS). Transfers N-acetyl-alpha-D-glucosamine to the nascent HS chain (GlcNAcT-II activity). Appears to lack GlcNAcT I and GlcAT-II activities. The chain is Exostosin-like 1 (EXTL1) from Homo sapiens (Human).